We begin with the raw amino-acid sequence, 371 residues long: COP9 signalosome complex subunit 5 (371 aa).

One can recognise an MPN domain in the interval 51–188 (VKISAVALIK…IGAFRTYPEG (138 aa)). Residues His134, His136, and Asp147 each contribute to the Zn(2+) site. A JAMM motif motif is present at residues 134 to 147 (HSHPGYGCWLSGID). Over residues 278–292 (NSSSKLKLKPTQPTT) the composition is skewed to low complexity. 2 disordered regions span residues 278-333 (NSSS…SRIT) and 352-371 (TPLTQSVDDKSAQATVQGRY). The span at 293-313 (KGKETTEGSDKKLKKGEKEFS) shows a compositional bias: basic and acidic residues. Residues 323-333 (NKVTQESSRIT) are compositionally biased toward polar residues.

Belongs to the peptidase M67A family. CSN5 subfamily. Component of the COP9 signalosome (CSN) complex.

The protein localises to the cytoplasm. The protein resides in the nucleus. Its function is as follows. Catalytic Component of the COP9 signalosome (CSN) complex that acts as an regulator of the ubiquitin (Ubl) conjugation pathway by mediating the deneddylation of the cullin subunit of SCF-type E3 ubiquitin-protein ligase complexes. This is COP9 signalosome complex subunit 5 (RRI1) from Cryptococcus neoformans var. neoformans serotype D (strain B-3501A) (Filobasidiella neoformans).